The primary structure comprises 475 residues: Ammonium transporter Rh type C (475 aa).

Over 1–20 (MGCVQSFRNFCDRPKNTNVR) the chain is Cytoplasmic. The helical transmembrane segment at 21–41 (ISLPAVCFVWQIAMIILFGVF) threads the bilayer. Residues 42-73 (IRYNEEADTHWVEYRKKENISSDIENDFYFRY) lie on the Extracellular side of the membrane. Residue asparagine 60 is glycosylated (N-linked (GlcNAc...) asparagine). Residues 74–94 (PSFQDVHVMIFVGFGFLMTFL) traverse the membrane as a helical segment. Topologically, residues 95–98 (KRYS) are cytoplasmic. Residues 99–119 (FGAVGFNFLIAAFGLQWALLM) form a helical membrane-spanning segment. Topologically, residues 120 to 138 (QGWFHSLDYTDGKIKIGIE) are extracellular. Residues 139-159 (NLINADFCVAGCLIAYGAVLG) form a helical membrane-spanning segment. Topologically, residues 160-167 (KVSPVQLM) are cytoplasmic. Residues 168-188 (VLTLFGITLFAVEEYIILNLI) form a helical membrane-spanning segment. The Extracellular segment spans residues 189–193 (HARDA). Residues 194-214 (GGSMVIHTFGGYYGLSISWML) form a helical membrane-spanning segment. The Cytoplasmic portion of the chain corresponds to 215 to 233 (YRPNLEQSSNLQGSVYQSD). The chain crosses the membrane as a helical span at residues 234–254 (VFAMIGTLFLWMFWPSFNSAI). Topologically, residues 255-265 (TDHGDGQHRAA) are extracellular. A helical membrane pass occupies residues 266 to 286 (INTYLALASTVLTTVAISSLF). The Cytoplasmic segment spans residues 287–299 (QKHGKLDMVHIQN). The chain crosses the membrane as a helical span at residues 300–320 (STLAGGVAVGTAAEFMLMPYG). A topological domain (extracellular) is located at residue serine 321. A helical membrane pass occupies residues 322 to 342 (LIVGFCCGIISTLGYIYLTPF). Over 343-357 (MEKYLKIQDTCGIHN) the chain is Cytoplasmic. The chain crosses the membrane as a helical span at residues 358-378 (LHAMPGLIGGIVGAITAAAAT). Residues 379–410 (ESVYGKEGLVNTFDFVGPFKNMVPTTQGGHQA) are Extracellular-facing. The helical transmembrane segment at 411-431 (AGLCVAICFGIGGGIMVGCIL) threads the bilayer. The Cytoplasmic portion of the chain corresponds to 432-475 (RLPIWCDPADDNCFNDEPYWELPEEEEIIPPILHYNNHMVNKDV).

It belongs to the ammonium transporter (TC 2.A.49) family. Rh subfamily. Homotrimer.

It is found in the apical cell membrane. Its function is as follows. Functions as an ammonia transporter. May play a role in the elimination of ammonia in the gill. This Tetraodon nigroviridis (Spotted green pufferfish) protein is Ammonium transporter Rh type C (rhcg).